The chain runs to 550 residues: Dipeptide-binding protein (550 aa).

An N-terminal signal peptide occupies residues 1-22; that stretch reads MKQAKIIGLSTVIALSGIILVA. Cys-23 carries N-palmitoyl cysteine lipidation. A lipid anchor (S-diacylglycerol cysteine) is attached at Cys-23.

The protein belongs to the bacterial solute-binding protein 5 family. In terms of assembly, the complex is composed of two ATP-binding proteins (DppD and DppF), two transmembrane proteins (DppB and DppC) and a solute-binding protein (DppA).

It is found in the cell membrane. Functionally, part of the ABC transporter DppABCDF involved in dipeptide transport. Binds di- and tripeptides with high affinity. Requires a free N-terminal alpha-amino group and an alpha-peptide bound contiguous with the N-terminal amino group, has a strong selectivity for L-residues, and shows preference for dipeptides containing methionine or arginine, followed by hydrophobic tripeptides consisting of leucine or valine residues. The polypeptide is Dipeptide-binding protein (Lactococcus lactis subsp. cremoris (strain MG1363)).